The following is a 427-amino-acid chain: Serine--tRNA ligase (427 aa).

231–233 contacts L-serine; the sequence is TAE. 262–264 provides a ligand contact to ATP; the sequence is RSE. An L-serine-binding site is contributed by glutamate 285. Position 349–352 (349–352) interacts with ATP; the sequence is EISS. An L-serine-binding site is contributed by serine 385.

This sequence belongs to the class-II aminoacyl-tRNA synthetase family. Type-1 seryl-tRNA synthetase subfamily. As to quaternary structure, homodimer. The tRNA molecule binds across the dimer.

The protein resides in the cytoplasm. It catalyses the reaction tRNA(Ser) + L-serine + ATP = L-seryl-tRNA(Ser) + AMP + diphosphate + H(+). The enzyme catalyses tRNA(Sec) + L-serine + ATP = L-seryl-tRNA(Sec) + AMP + diphosphate + H(+). Its pathway is aminoacyl-tRNA biosynthesis; selenocysteinyl-tRNA(Sec) biosynthesis; L-seryl-tRNA(Sec) from L-serine and tRNA(Sec): step 1/1. Its function is as follows. Catalyzes the attachment of serine to tRNA(Ser). Is also able to aminoacylate tRNA(Sec) with serine, to form the misacylated tRNA L-seryl-tRNA(Sec), which will be further converted into selenocysteinyl-tRNA(Sec). This chain is Serine--tRNA ligase, found in Rhizobium etli (strain ATCC 51251 / DSM 11541 / JCM 21823 / NBRC 15573 / CFN 42).